Here is a 276-residue protein sequence, read N- to C-terminus: Vitamin B12-binding protein (276 aa).

Residues 1-20 (MLVIRLIACTFLFITPSLLA) form the signal peptide. A Fe/B12 periplasmic-binding domain is found at 27-274 (RIISLAPHAT…QVCTYLKIAQ (248 aa)). Tyr-54 is a cyanocob(III)alamin binding site. Cys-187 and Cys-267 form a disulfide bridge.

This sequence belongs to the BtuF family. As to quaternary structure, the complex is composed of two ATP-binding proteins (BtuD), two transmembrane proteins (BtuC) and a solute-binding protein (BtuF).

Its subcellular location is the periplasm. In terms of biological role, part of the ABC transporter complex BtuCDF involved in vitamin B12 import. Binds vitamin B12 and delivers it to the periplasmic surface of BtuC. In Vibrio cholerae serotype O1 (strain ATCC 39541 / Classical Ogawa 395 / O395), this protein is Vitamin B12-binding protein.